Here is a 186-residue protein sequence, read N- to C-terminus: Nucleoside diphosphate kinase, mitochondrial (186 aa).

The N-terminal 32 residues, 1 to 32, are a transit peptide targeting the mitochondrion; that stretch reads MGSLFGRVAALRALLCGPRFQCLLVRPSSGGP. Positions 44, 92, 120, 126, 137, and 147 each coordinate ATP. H150 functions as the Pros-phosphohistidine intermediate in the catalytic mechanism.

The protein belongs to the NDK family. In terms of assembly, homohexamer. Interacts with OPA1. Interacts with CAPN8. The cofactor is Mg(2+). Expressed in the base region of the oxyntic and pyloric mucosae.

The protein localises to the mitochondrion intermembrane space. It is found in the mitochondrion matrix. It carries out the reaction a 2'-deoxyribonucleoside 5'-diphosphate + ATP = a 2'-deoxyribonucleoside 5'-triphosphate + ADP. The catalysed reaction is a ribonucleoside 5'-diphosphate + ATP = a ribonucleoside 5'-triphosphate + ADP. In terms of biological role, major role in the synthesis of nucleoside triphosphates other than ATP. The ATP gamma phosphate is transferred to the NDP beta phosphate via a ping-pong mechanism, using a phosphorylated active-site intermediate. Through the catalyzed exchange of gamma-phosphate between di- and triphosphonucleosides participates in regulation of intracellular nucleotide homeostasis. Binds to anionic phospholipids, predominantly to cardiolipin; the binding inhibits its phosphotransfer activity. Acts as a mitochondria-specific NDK; its association with cardiolipin-containing mitochondrial inner membrane is coupled to respiration suggesting that ADP locally regenerated in the mitochondrion innermembrane space by its activity is directly taken up via ANT ADP/ATP translocase into the matrix space to stimulate respiratory ATP regeneration. Proposed to increase GTP-loading on dynamin-related GTPase OPA1 in mitochondria. In vitro can induce liposome cross-linking suggesting that it can cross-link inner and outer membranes to form contact sites, and promotes intermembrane migration of anionic phosphoplipids. Promotes the redistribution of cardiolipin between the mitochondrial inner membrane and outer membrane which is implicated in pro-apoptotic signaling. This Mus musculus (Mouse) protein is Nucleoside diphosphate kinase, mitochondrial (Nme4).